Consider the following 185-residue polypeptide: dCTP deaminase (185 aa).

Position 107 to 112 (107 to 112 (KSTYAR)) interacts with dCTP. Glu133 functions as the Proton donor/acceptor in the catalytic mechanism. DCTP is bound by residues Gln152, Tyr166, and Gln176.

It belongs to the dCTP deaminase family. As to quaternary structure, homotrimer.

The catalysed reaction is dCTP + H2O + H(+) = dUTP + NH4(+). The protein operates within pyrimidine metabolism; dUMP biosynthesis; dUMP from dCTP (dUTP route): step 1/2. Functionally, catalyzes the deamination of dCTP to dUTP. This Nitratiruptor sp. (strain SB155-2) protein is dCTP deaminase.